The following is a 629-amino-acid chain: Extracellular metalloproteinase 10 (629 aa).

The first 19 residues, 1-19 (MHGLLLAAGLLSLPLYTIA), serve as a signal peptide directing secretion. Positions 20–240 (HTQPSGALSR…VHNVVDYVAH (221 aa)) are excised as a propeptide. Asparagine 281 and asparagine 331 each carry an N-linked (GlcNAc...) asparagine glycan. Histidine 424 is a Zn(2+) binding site. Glutamate 425 is a catalytic residue. A Zn(2+)-binding site is contributed by histidine 428. Residues asparagine 469 and asparagine 617 are each glycosylated (N-linked (GlcNAc...) asparagine).

It belongs to the peptidase M36 family. It depends on Zn(2+) as a cofactor.

The protein localises to the secreted. Secreted metalloproteinase that allows assimilation of proteinaceous substrates and probably acts as a virulence factor. The chain is Extracellular metalloproteinase 10 (MEP10) from Coccidioides posadasii (strain C735) (Valley fever fungus).